The following is a 78-amino-acid chain: Small integral membrane protein 1 (78 aa).

An N-acetylmethionine modification is found at methionine 1. The segment covering 1-18 has biased composition (basic and acidic residues); the sequence is MQPQESHVHYSRWEDGSR. The segment at 1–20 is disordered; sequence MQPQESHVHYSRWEDGSRDG. Residues 1-46 are Cytoplasmic-facing; it reads MQPQESHVHYSRWEDGSRDGVSLGAVSSTEEASRCRRISQRLCTGK. 4 positions are modified to phosphoserine: serine 6, serine 17, serine 22, and serine 27. Residues 47–67 traverse the membrane as a helical; Signal-anchor for type II membrane protein segment; it reads LGIAMKVLGGVALFWIIFILG. Topologically, residues 68–78 are extracellular; the sequence is YLTGYYVHKCK. The interval 68 to 78 is displays the Vel antigen; that stretch reads YLTGYYVHKCK.

It belongs to the SMIM1 family. Homooligomer; disulfide-linked. As to expression, highly expressed in the bone marrow and expressed at lower levels in non-hematopoietic tissues. Highly expressed in erythroleukemia cell lines. Up-regulated in CD34+ hematopoietic progenitors cultured toward red blood cells.

It localises to the cell membrane. In terms of biological role, regulator of red blood cell formation. This is Small integral membrane protein 1 from Homo sapiens (Human).